The sequence spans 230 residues: LexA repressor (230 aa).

Positions 28–48 (IREIGEALDIRSTNGVNDHLK) form a DNA-binding region, H-T-H motif. Catalysis depends on for autocatalytic cleavage activity residues Ser-148 and Lys-185.

It belongs to the peptidase S24 family. In terms of assembly, homodimer.

It catalyses the reaction Hydrolysis of Ala-|-Gly bond in repressor LexA.. Represses a number of genes involved in the response to DNA damage (SOS response), including recA and lexA. In the presence of single-stranded DNA, RecA interacts with LexA causing an autocatalytic cleavage which disrupts the DNA-binding part of LexA, leading to derepression of the SOS regulon and eventually DNA repair. This is LexA repressor from Anaeromyxobacter sp. (strain K).